A 38-amino-acid chain; its full sequence is ATP synthase subunit O, mitochondrial (38 aa).

Belongs to the ATPase delta chain family. In terms of assembly, F-type ATPases have 2 components, CF(1) - the catalytic core - and CF(0) - the membrane proton channel. CF(1) has five subunits: alpha(3), beta(3), gamma(1), delta(1), epsilon(1). CF(0) has three main subunits: a, b and c.

The protein localises to the mitochondrion. It is found in the mitochondrion inner membrane. Its function is as follows. Mitochondrial membrane ATP synthase (F(1)F(0) ATP synthase or Complex V) produces ATP from ADP in the presence of a proton gradient across the membrane which is generated by electron transport complexes of the respiratory chain. F-type ATPases consist of two structural domains, F(1) - containing the extramembraneous catalytic core and F(0) - containing the membrane proton channel, linked together by a central stalk and a peripheral stalk. During catalysis, ATP synthesis in the catalytic domain of F(1) is coupled via a rotary mechanism of the central stalk subunits to proton translocation. Part of the complex F(0) domain and the peripheric stalk, which acts as a stator to hold the catalytic alpha(3)beta(3) subcomplex and subunit a/ATP6 static relative to the rotary elements. This chain is ATP synthase subunit O, mitochondrial, found in Pisum sativum (Garden pea).